The sequence spans 380 residues: Succinyl-diaminopimelate desuccinylase (380 aa).

Histidine 66 provides a ligand contact to Zn(2+). Aspartate 68 is a catalytic residue. Residue aspartate 99 participates in Zn(2+) binding. Glutamate 135 (proton acceptor) is an active-site residue. 3 residues coordinate Zn(2+): glutamate 136, glutamate 164, and histidine 350.

It belongs to the peptidase M20A family. DapE subfamily. Homodimer. Requires Zn(2+) as cofactor. The cofactor is Co(2+).

It carries out the reaction N-succinyl-(2S,6S)-2,6-diaminopimelate + H2O = (2S,6S)-2,6-diaminopimelate + succinate. It participates in amino-acid biosynthesis; L-lysine biosynthesis via DAP pathway; LL-2,6-diaminopimelate from (S)-tetrahydrodipicolinate (succinylase route): step 3/3. In terms of biological role, catalyzes the hydrolysis of N-succinyl-L,L-diaminopimelic acid (SDAP), forming succinate and LL-2,6-diaminopimelate (DAP), an intermediate involved in the bacterial biosynthesis of lysine and meso-diaminopimelic acid, an essential component of bacterial cell walls. This Magnetococcus marinus (strain ATCC BAA-1437 / JCM 17883 / MC-1) protein is Succinyl-diaminopimelate desuccinylase.